Consider the following 467-residue polypeptide: Glutamate--tRNA ligase (467 aa).

A 'HIGH' region motif is present at residues 9 to 19; that stretch reads PSPTGFLHIGG. The 'KMSKS' region motif lies at 250-254; it reads KLSKR. K253 contributes to the ATP binding site.

The protein belongs to the class-I aminoacyl-tRNA synthetase family. Glutamate--tRNA ligase type 1 subfamily. As to quaternary structure, monomer.

It localises to the cytoplasm. The catalysed reaction is tRNA(Glu) + L-glutamate + ATP = L-glutamyl-tRNA(Glu) + AMP + diphosphate. Functionally, catalyzes the attachment of glutamate to tRNA(Glu) in a two-step reaction: glutamate is first activated by ATP to form Glu-AMP and then transferred to the acceptor end of tRNA(Glu). In Mesomycoplasma hyopneumoniae (strain 232) (Mycoplasma hyopneumoniae), this protein is Glutamate--tRNA ligase.